A 413-amino-acid polypeptide reads, in one-letter code: Putative glutamate synthase [NADPH] small chain (413 aa).

The [4Fe-4S] cluster site is built by Cys-33, Cys-37, Cys-43, and Cys-47.

Aggregate of 4 catalytic active heterodimers, consisting of a large and a small subunit. It depends on [4Fe-4S] cluster as a cofactor.

The catalysed reaction is 2 L-glutamate + NADP(+) = L-glutamine + 2-oxoglutarate + NADPH + H(+). It functions in the pathway amino-acid biosynthesis; L-glutamate biosynthesis via GLT pathway; L-glutamate from 2-oxoglutarate and L-glutamine (NADP(+) route): step 1/1. Its pathway is energy metabolism; nitrogen metabolism. This chain is Putative glutamate synthase [NADPH] small chain (gltD), found in Cereibacter sphaeroides (Rhodobacter sphaeroides).